We begin with the raw amino-acid sequence, 100 residues long: MYB-like transcription factor TCL2 (100 aa).

Residues 37–74 (TEQEEDLIFRMHRLVGDRWDLIAGRVVGREAKDIERYW) form the Myb-like domain.

In terms of assembly, interacts with GL3. As to expression, expressed in cotyledons, petioles, rosette leaves, hydathodes, cauline leaves, stems, pedicels and flower buds.

The protein localises to the nucleus. Its function is as follows. MYB-type transcription factor involved in trichome cell specification. Acts as a negative regulator of trichome patterning and formation. May function by suppressing the expression of GL3. This Arabidopsis thaliana (Mouse-ear cress) protein is MYB-like transcription factor TCL2 (TCL2).